The chain runs to 187 residues: UPF0232 protein MUL_0004 (187 aa).

Over residues M1–D12 the composition is skewed to gly residues. Disordered stretches follow at residues M1 to G77 and A166 to G187. The segment covering A14–A30 has biased composition (basic and acidic residues). Positions E31–R55 are enriched in low complexity.

The protein belongs to the UPF0232 family.

This chain is UPF0232 protein MUL_0004, found in Mycobacterium ulcerans (strain Agy99).